The chain runs to 601 residues: Zinc finger CCCH domain-containing protein 33 (601 aa).

ANK repeat units follow at residues Glu-71 to Arg-101 and Asp-106 to Ala-138. Low complexity predominate over residues Pro-167–Ser-180. A disordered region spans residues Pro-167–Leu-203. 2 consecutive C3H1-type zinc fingers follow at residues Ser-252–Phe-280 and Gln-288–Asp-312.

The polypeptide is Zinc finger CCCH domain-containing protein 33 (Oryza sativa subsp. japonica (Rice)).